Reading from the N-terminus, the 874-residue chain is Leucine--tRNA ligase (874 aa).

Residues 43 to 53 carry the 'HIGH' region motif; that stretch reads PYPSGRIHIGH. Residues 630–634 carry the 'KMSKS' region motif; sequence KMSKS. Lysine 633 is an ATP binding site.

Belongs to the class-I aminoacyl-tRNA synthetase family.

It is found in the cytoplasm. It carries out the reaction tRNA(Leu) + L-leucine + ATP = L-leucyl-tRNA(Leu) + AMP + diphosphate. The polypeptide is Leucine--tRNA ligase (Bradyrhizobium sp. (strain BTAi1 / ATCC BAA-1182)).